The following is a 124-amino-acid chain: MATVNQLVRKGRQKPVVKSNVPALEACPQKRGVCTRVYTTTPKKPNSAMRKVCRVRLTNGYEVSSYIGGEGHNLQEHSVVLIRGGRVKDLPGVRYHTVRGALDCSGVNDRRQGRSKYGAKRPKS.

The tract at residues 105–124 (SGVNDRRQGRSKYGAKRPKS) is disordered. Residues 113–124 (GRSKYGAKRPKS) are compositionally biased toward basic residues.

This sequence belongs to the universal ribosomal protein uS12 family. In terms of assembly, part of the 30S ribosomal subunit. Contacts proteins S8 and S17. May interact with IF1 in the 30S initiation complex.

Its function is as follows. With S4 and S5 plays an important role in translational accuracy. Interacts with and stabilizes bases of the 16S rRNA that are involved in tRNA selection in the A site and with the mRNA backbone. Located at the interface of the 30S and 50S subunits, it traverses the body of the 30S subunit contacting proteins on the other side and probably holding the rRNA structure together. The combined cluster of proteins S8, S12 and S17 appears to hold together the shoulder and platform of the 30S subunit. This is Small ribosomal subunit protein uS12 from Idiomarina loihiensis (strain ATCC BAA-735 / DSM 15497 / L2-TR).